A 255-amino-acid polypeptide reads, in one-letter code: Type III pantothenate kinase (255 aa).

An ATP-binding site is contributed by 6 to 13 (DIGNTNIV). 107 to 110 (GSDC) provides a ligand contact to substrate. Residue Asp-109 is the Proton acceptor of the active site. Asp-129 contacts K(+). Thr-132 provides a ligand contact to ATP. Thr-184 contributes to the substrate binding site.

It belongs to the type III pantothenate kinase family. Homodimer. It depends on NH4(+) as a cofactor. K(+) serves as cofactor.

Its subcellular location is the cytoplasm. It catalyses the reaction (R)-pantothenate + ATP = (R)-4'-phosphopantothenate + ADP + H(+). Its pathway is cofactor biosynthesis; coenzyme A biosynthesis; CoA from (R)-pantothenate: step 1/5. Its function is as follows. Catalyzes the phosphorylation of pantothenate (Pan), the first step in CoA biosynthesis. The protein is Type III pantothenate kinase of Bifidobacterium longum subsp. infantis (strain ATCC 15697 / DSM 20088 / JCM 1222 / NCTC 11817 / S12).